The chain runs to 273 residues: Undecaprenyl-diphosphatase (273 aa).

8 helical membrane-spanning segments follow: residues 18–40, 45–65, 92–112, 114–134, 151–171, 189–209, 225–245, and 253–273; these read GLTEFLPVSSTGHMILVGSLLGF, AKTFEVIIQLGSILAVVVVFW, GHILLGMIPAVVLGLVFHEQI, AIFAPIYVMYALVVGGVLLLA, LTYLQAFLIGCFQCLALWPGF, YAASEFSFILAVPMMLGATVL, MFAIGFVTAFVVALLAIKFFL, and FVPFAIYRFILAVVVYWILIG.

This sequence belongs to the UppP family.

It is found in the cell inner membrane. The enzyme catalyses di-trans,octa-cis-undecaprenyl diphosphate + H2O = di-trans,octa-cis-undecaprenyl phosphate + phosphate + H(+). Its function is as follows. Catalyzes the dephosphorylation of undecaprenyl diphosphate (UPP). Confers resistance to bacitracin. This is Undecaprenyl-diphosphatase from Sodalis glossinidius (strain morsitans).